Reading from the N-terminus, the 130-residue chain is Small ribosomal subunit protein uS9 (130 aa).

This sequence belongs to the universal ribosomal protein uS9 family.

The polypeptide is Small ribosomal subunit protein uS9 (Exiguobacterium sp. (strain ATCC BAA-1283 / AT1b)).